The sequence spans 140 residues: Hemoglobin subunit beta (140 aa).

Residues 1-140 (GGSDVSAFLA…VGEALAKGYH (140 aa)) form the Globin domain. Positions 57 and 86 each coordinate heme b.

This sequence belongs to the globin family. As to quaternary structure, heterotetramer of either two alpha-B chains or two alpha-C chains and two beta chains.

In terms of biological role, the beta chain is a component of adult hemoglobins B. And C. In Aquarana catesbeiana (American bullfrog), this protein is Hemoglobin subunit beta (HBB).